Reading from the N-terminus, the 266-residue chain is NAD kinase 1 (266 aa).

Aspartate 45 acts as the Proton acceptor in catalysis. NAD(+) is bound by residues 45–46 (DG), 122–123 (NE), and arginine 148. ATP is bound at residue aspartate 150. NAD(+) contacts are provided by residues serine 158 and 161-166 (TAYNKA).

Belongs to the NAD kinase family. Homodimer. The cofactor is Ca(2+). Mn(2+) is required as a cofactor.

It is found in the cytoplasm. It catalyses the reaction NAD(+) + ATP = ADP + NADP(+) + H(+). With respect to regulation, allosterically inhibited by NADP and activated by quinolinic acid. Strongly inhibited by HgCl(2). In terms of biological role, involved in the regulation of the intracellular balance of NAD and NADP, and is a key enzyme in the biosynthesis of NADP. Catalyzes specifically the phosphorylation on 2'-hydroxyl of the adenosine moiety of NAD to yield NADP. It can use ATP and other nucleoside triphosphates (GTP, UTP) as well as inorganic polyphosphate (poly(P)) as a source of phosphorus. The chain is NAD kinase 1 (ppnKA) from Bacillus subtilis (strain 168).